The primary structure comprises 175 residues: Peptide deformylase (175 aa).

Fe cation contacts are provided by Cys-96 and His-138. Glu-139 is a catalytic residue. His-142 contributes to the Fe cation binding site.

This sequence belongs to the polypeptide deformylase family. The cofactor is Fe(2+).

The enzyme catalyses N-terminal N-formyl-L-methionyl-[peptide] + H2O = N-terminal L-methionyl-[peptide] + formate. Removes the formyl group from the N-terminal Met of newly synthesized proteins. Requires at least a dipeptide for an efficient rate of reaction. N-terminal L-methionine is a prerequisite for activity but the enzyme has broad specificity at other positions. This is Peptide deformylase from Helicobacter acinonychis (strain Sheeba).